The following is a 294-amino-acid chain: MTRQDASTPAPSGARIIDGAALAQRIREDVARRVQALAAKGVRPGLAVVLVGDDPASQVYVRNKVAACEKAGLYSIKEQYPADMTEAELLARIDTLNRDPAIHGILVQLPLPPHMSSHKVIEAIAAEKDVDGFHISNAGLLMTGQPLFRPCTPYGVMKMLEAEGVPLRGAEAVIVGASNIVGKPMAMLLLQAGATITICNSKTRDLAAQTRRADVLVVATGKPGMIDGSMIKPGAVVIDVGINRGADGKLCGDVDFASAREVAGAITPVPGGVGPMTIAMLLVNTVEAAERTAG.

NADP(+) is bound by residues 176-178 (GAS), serine 201, and isoleucine 242.

It belongs to the tetrahydrofolate dehydrogenase/cyclohydrolase family. Homodimer.

The catalysed reaction is (6R)-5,10-methylene-5,6,7,8-tetrahydrofolate + NADP(+) = (6R)-5,10-methenyltetrahydrofolate + NADPH. It carries out the reaction (6R)-5,10-methenyltetrahydrofolate + H2O = (6R)-10-formyltetrahydrofolate + H(+). It functions in the pathway one-carbon metabolism; tetrahydrofolate interconversion. In terms of biological role, catalyzes the oxidation of 5,10-methylenetetrahydrofolate to 5,10-methenyltetrahydrofolate and then the hydrolysis of 5,10-methenyltetrahydrofolate to 10-formyltetrahydrofolate. The protein is Bifunctional protein FolD of Bordetella petrii (strain ATCC BAA-461 / DSM 12804 / CCUG 43448).